We begin with the raw amino-acid sequence, 215 residues long: MSPKTRLDSDFFGPGDRWQTVAGVDEVGRGCLFGPVVTAAVILPETAIAPLQQAGVTDSKRLSQRQRQQLYPLICEVALATGWGLASVAEIERWNILQATFLAMRRAIAKLDRPISRCLIDGNQQVPQLTYPQTTVIQGDRHCITIAAASILAKVWRDRLIERLDERYPGYALGRHKGYGTAQHRQAILQLGPTPLHRIRFLRSLRQPSQQIDLF.

Residues 19-213 (QTVAGVDEVG…SLRQPSQQID (195 aa)) form the RNase H type-2 domain. D25, E26, and D121 together coordinate a divalent metal cation.

It belongs to the RNase HII family. Mn(2+) is required as a cofactor. Requires Mg(2+) as cofactor.

It localises to the cytoplasm. It carries out the reaction Endonucleolytic cleavage to 5'-phosphomonoester.. Endonuclease that specifically degrades the RNA of RNA-DNA hybrids. In Synechococcus elongatus (strain ATCC 33912 / PCC 7942 / FACHB-805) (Anacystis nidulans R2), this protein is Ribonuclease HII.